Consider the following 319-residue polypeptide: Phosphate transport system permease protein PstC (319 aa).

The Cytoplasmic segment spans residues 1 to 24 (MAATKPAFNPPGKKGDIIFSVLVK). Residues 25–44 (LAALIVLLMLGGIIVSLIIS) traverse the membrane as a helical segment. Residues 45 to 74 (SWPSIQKFGLAFLWTKEWDAPNDIYGALVP) lie on the Periplasmic side of the membrane. A helical transmembrane segment spans residues 75–94 (IYGTLVTSFIALLIAVPVSF). In terms of domain architecture, ABC transmembrane type-1 spans 75–305 (IYGTLVTSFI…VITFIVLAAS (231 aa)). Residues 95–117 (GIALFLTELAPGWLKRPLGIAIE) lie on the Cytoplasmic side of the membrane. A helical transmembrane segment spans residues 118-137 (LLAAIPSIVYGMWGLFIFAP). Residues 138 to 167 (LFAVYFQEPVGNIMSNIPIVGALFSGPAFG) lie on the Periplasmic side of the membrane. Residues 168–187 (IGILAAGVILAIMIIPYIAA) traverse the membrane as a helical segment. Over 188–232 (VMRDVFEQTPVMMKESAYGIGCTTWEVIWRIVLPFTKNGVIGGIM) the chain is Cytoplasmic. A helical transmembrane segment spans residues 233–252 (LGLGRALGETMAVTFIIGNT). Topologically, residues 253-283 (YQLDSASLYMPGNSITSALANEFAEAESGLH) are periplasmic. A helical transmembrane segment spans residues 284–303 (VAALMELGLILFVITFIVLA). Residues 304–319 (ASKFMIMRLAKNEGAR) lie on the Cytoplasmic side of the membrane.

It belongs to the binding-protein-dependent transport system permease family. CysTW subfamily.

The protein localises to the cell inner membrane. Part of the binding-protein-dependent transport system for phosphate; probably responsible for the translocation of the substrate across the membrane. This is Phosphate transport system permease protein PstC (pstC) from Escherichia coli O157:H7.